Reading from the N-terminus, the 307-residue chain is Membrane protein insertase YidC 2 (307 aa).

A signal peptide spans 1–23 (MKLTLNRILFSGLALSILFTLTG). C24 is lipidated: N-palmitoyl cysteine. C24 carries S-diacylglycerol cysteine lipidation. Transmembrane regions (helical) follow at residues 58-78 (LGYGLAIIIVTIIVRTLILPL), 135-155 (LGGIGCLPLLIQMPFFSAMYF), 179-199 (VLTAIIAALYFFQSWLSMMAV), 209-225 (TMMYTMPIMMIFMSFSL), and 231-251 (LYWLVGGFFSIIQQLITTYLL). The segment at 263–307 (YAKTPPKAYQSTSSRKDVTPSQNMEQANLPKKIKSNRNAGKQRKR) is disordered. Over residues 271–288 (YQSTSSRKDVTPSQNMEQ) the composition is skewed to polar residues. Residues 293–307 (KKIKSNRNAGKQRKR) show a composition bias toward basic residues.

Belongs to the OXA1/ALB3/YidC family. Type 2 subfamily.

The protein resides in the cell membrane. Functionally, required for the insertion and/or proper folding and/or complex formation of integral membrane proteins into the membrane. Involved in integration of membrane proteins that insert both dependently and independently of the Sec translocase complex, as well as at least some lipoproteins. The sequence is that of Membrane protein insertase YidC 2 from Streptococcus pyogenes serotype M18 (strain MGAS8232).